The primary structure comprises 718 residues: DNA ligase (718 aa).

NAD(+) contacts are provided by residues 34–38 (DAEYD), 83–84 (SL), and E115. Catalysis depends on K117, which acts as the N6-AMP-lysine intermediate. Residues R138, E186, K302, and K326 each coordinate NAD(+). 4 residues coordinate Zn(2+): C420, C423, C438, and C444. In terms of domain architecture, BRCT spans 604 to 694 (PKGDALAGKT…DRSAPAASNN (91 aa)).

It belongs to the NAD-dependent DNA ligase family. LigA subfamily. It depends on Mg(2+) as a cofactor. The cofactor is Mn(2+).

It catalyses the reaction NAD(+) + (deoxyribonucleotide)n-3'-hydroxyl + 5'-phospho-(deoxyribonucleotide)m = (deoxyribonucleotide)n+m + AMP + beta-nicotinamide D-nucleotide.. In terms of biological role, DNA ligase that catalyzes the formation of phosphodiester linkages between 5'-phosphoryl and 3'-hydroxyl groups in double-stranded DNA using NAD as a coenzyme and as the energy source for the reaction. It is essential for DNA replication and repair of damaged DNA. The protein is DNA ligase of Roseiflexus castenholzii (strain DSM 13941 / HLO8).